We begin with the raw amino-acid sequence, 500 residues long: L-arabinose isomerase (500 aa).

Mn(2+)-binding residues include glutamate 306, glutamate 333, histidine 350, and histidine 450.

Belongs to the arabinose isomerase family. In terms of assembly, homohexamer. The cofactor is Mn(2+).

It carries out the reaction beta-L-arabinopyranose = L-ribulose. It functions in the pathway carbohydrate degradation; L-arabinose degradation via L-ribulose; D-xylulose 5-phosphate from L-arabinose (bacterial route): step 1/3. Catalyzes the conversion of L-arabinose to L-ribulose. This is L-arabinose isomerase from Escherichia coli O157:H7.